A 218-amino-acid chain; its full sequence is Peptide methionine sulfoxide reductase MsrA (218 aa).

The active site involves Cys-57.

This sequence belongs to the MsrA Met sulfoxide reductase family.

The catalysed reaction is L-methionyl-[protein] + [thioredoxin]-disulfide + H2O = L-methionyl-(S)-S-oxide-[protein] + [thioredoxin]-dithiol. The enzyme catalyses [thioredoxin]-disulfide + L-methionine + H2O = L-methionine (S)-S-oxide + [thioredoxin]-dithiol. Its function is as follows. Has an important function as a repair enzyme for proteins that have been inactivated by oxidation. Catalyzes the reversible oxidation-reduction of methionine sulfoxide in proteins to methionine. This Brucella abortus (strain S19) protein is Peptide methionine sulfoxide reductase MsrA.